A 447-amino-acid chain; its full sequence is ATP-dependent protease ATPase subunit HslU (447 aa).

ATP is bound by residues I18, 60–65 (GVGKTE), D259, E325, and R397.

It belongs to the ClpX chaperone family. HslU subfamily. In terms of assembly, a double ring-shaped homohexamer of HslV is capped on each side by a ring-shaped HslU homohexamer. The assembly of the HslU/HslV complex is dependent on binding of ATP.

Its subcellular location is the cytoplasm. Its function is as follows. ATPase subunit of a proteasome-like degradation complex; this subunit has chaperone activity. The binding of ATP and its subsequent hydrolysis by HslU are essential for unfolding of protein substrates subsequently hydrolyzed by HslV. HslU recognizes the N-terminal part of its protein substrates and unfolds these before they are guided to HslV for hydrolysis. In Burkholderia pseudomallei (strain K96243), this protein is ATP-dependent protease ATPase subunit HslU.